Here is a 75-residue protein sequence, read N- to C-terminus: Sec-independent protein translocase protein TatA (75 aa).

A helical membrane pass occupies residues 1–21; the sequence is MFGLSPAQLIILLVVILLIFG.

Belongs to the TatA/E family. In terms of assembly, the Tat system comprises two distinct complexes: a TatABC complex, containing multiple copies of TatA, TatB and TatC subunits, and a separate TatA complex, containing only TatA subunits. Substrates initially bind to the TatABC complex, which probably triggers association of the separate TatA complex to form the active translocon.

Its subcellular location is the cell inner membrane. In terms of biological role, part of the twin-arginine translocation (Tat) system that transports large folded proteins containing a characteristic twin-arginine motif in their signal peptide across membranes. TatA could form the protein-conducting channel of the Tat system. This Haemophilus influenzae (strain PittEE) protein is Sec-independent protein translocase protein TatA.